Reading from the N-terminus, the 795-residue chain is Phenylalanine--tRNA ligase beta subunit (795 aa).

Positions 39-148 constitute a tRNA-binding domain; the sequence is AGEFTGVKVG…EGTTLGADVR (110 aa). One can recognise a B5 domain in the interval 401-476; it reads PKANTVELRR…RIYGYNNIPN (76 aa). Asp-454, Asp-460, Glu-463, and Glu-464 together coordinate Mg(2+). The 94-residue stretch at 701-794 folds into the FDX-ACB domain; sequence SKFPANRRDI…IGEKFSATLR (94 aa).

It belongs to the phenylalanyl-tRNA synthetase beta subunit family. Type 1 subfamily. As to quaternary structure, tetramer of two alpha and two beta subunits. Mg(2+) serves as cofactor.

It is found in the cytoplasm. It catalyses the reaction tRNA(Phe) + L-phenylalanine + ATP = L-phenylalanyl-tRNA(Phe) + AMP + diphosphate + H(+). The chain is Phenylalanine--tRNA ligase beta subunit from Aliivibrio fischeri (strain ATCC 700601 / ES114) (Vibrio fischeri).